Reading from the N-terminus, the 224-residue chain is Thiamine-phosphate synthase (224 aa).

Residues glutamine 43–lysine 47 and asparagine 75 each bind 4-amino-2-methyl-5-(diphosphooxymethyl)pyrimidine. Aspartate 76 and aspartate 95 together coordinate Mg(2+). Serine 114 contributes to the 4-amino-2-methyl-5-(diphosphooxymethyl)pyrimidine binding site. Serine 141–threonine 143 provides a ligand contact to 2-[(2R,5Z)-2-carboxy-4-methylthiazol-5(2H)-ylidene]ethyl phosphate. A 4-amino-2-methyl-5-(diphosphooxymethyl)pyrimidine-binding site is contributed by lysine 144. A 2-[(2R,5Z)-2-carboxy-4-methylthiazol-5(2H)-ylidene]ethyl phosphate-binding site is contributed by glycine 171.

The protein belongs to the thiamine-phosphate synthase family. Mg(2+) is required as a cofactor.

The enzyme catalyses 2-[(2R,5Z)-2-carboxy-4-methylthiazol-5(2H)-ylidene]ethyl phosphate + 4-amino-2-methyl-5-(diphosphooxymethyl)pyrimidine + 2 H(+) = thiamine phosphate + CO2 + diphosphate. It catalyses the reaction 2-(2-carboxy-4-methylthiazol-5-yl)ethyl phosphate + 4-amino-2-methyl-5-(diphosphooxymethyl)pyrimidine + 2 H(+) = thiamine phosphate + CO2 + diphosphate. The catalysed reaction is 4-methyl-5-(2-phosphooxyethyl)-thiazole + 4-amino-2-methyl-5-(diphosphooxymethyl)pyrimidine + H(+) = thiamine phosphate + diphosphate. Its pathway is cofactor biosynthesis; thiamine diphosphate biosynthesis; thiamine phosphate from 4-amino-2-methyl-5-diphosphomethylpyrimidine and 4-methyl-5-(2-phosphoethyl)-thiazole: step 1/1. Functionally, condenses 4-methyl-5-(beta-hydroxyethyl)thiazole monophosphate (THZ-P) and 2-methyl-4-amino-5-hydroxymethyl pyrimidine pyrophosphate (HMP-PP) to form thiamine monophosphate (TMP). In Methylococcus capsulatus (strain ATCC 33009 / NCIMB 11132 / Bath), this protein is Thiamine-phosphate synthase.